We begin with the raw amino-acid sequence, 340 residues long: tRNA N6-adenosine threonylcarbamoyltransferase (340 aa).

2 residues coordinate Fe cation: His-113 and His-117. Residues 135 to 139 (LVSGG), Asp-169, Gly-182, Asp-186, and Asn-274 contribute to the substrate site. Asp-302 lines the Fe cation pocket.

This sequence belongs to the KAE1 / TsaD family. Fe(2+) is required as a cofactor.

Its subcellular location is the cytoplasm. It carries out the reaction L-threonylcarbamoyladenylate + adenosine(37) in tRNA = N(6)-L-threonylcarbamoyladenosine(37) in tRNA + AMP + H(+). In terms of biological role, required for the formation of a threonylcarbamoyl group on adenosine at position 37 (t(6)A37) in tRNAs that read codons beginning with adenine. Is involved in the transfer of the threonylcarbamoyl moiety of threonylcarbamoyl-AMP (TC-AMP) to the N6 group of A37, together with TsaE and TsaB. TsaD likely plays a direct catalytic role in this reaction. This chain is tRNA N6-adenosine threonylcarbamoyltransferase, found in Mycobacterium sp. (strain KMS).